The following is a 473-amino-acid chain: ATP synthase subunit beta (473 aa).

ATP is bound at residue 158-165; the sequence is GGAGVGKT.

It belongs to the ATPase alpha/beta chains family. As to quaternary structure, F-type ATPases have 2 components, CF(1) - the catalytic core - and CF(0) - the membrane proton channel. CF(1) has five subunits: alpha(3), beta(3), gamma(1), delta(1), epsilon(1). CF(0) has three main subunits: a(1), b(2) and c(9-12). The alpha and beta chains form an alternating ring which encloses part of the gamma chain. CF(1) is attached to CF(0) by a central stalk formed by the gamma and epsilon chains, while a peripheral stalk is formed by the delta and b chains.

The protein resides in the cell membrane. It catalyses the reaction ATP + H2O + 4 H(+)(in) = ADP + phosphate + 5 H(+)(out). Functionally, produces ATP from ADP in the presence of a proton gradient across the membrane. The catalytic sites are hosted primarily by the beta subunits. The chain is ATP synthase subunit beta from Geobacillus sp. (strain WCH70).